A 249-amino-acid chain; its full sequence is Aliphatic sulfonates import ATP-binding protein SsuB 2 (249 aa).

The ABC transporter domain maps to 5–233 (LDLLEIRKAY…PRDRRAVELA (229 aa)). 37 to 44 (GPSGCGKS) contributes to the ATP binding site.

It belongs to the ABC transporter superfamily. Aliphatic sulfonates importer (TC 3.A.1.17.2) family. As to quaternary structure, the complex is composed of two ATP-binding proteins (SsuB), two transmembrane proteins (SsuC) and a solute-binding protein (SsuA).

It localises to the cell inner membrane. It carries out the reaction ATP + H2O + aliphatic sulfonate-[sulfonate-binding protein]Side 1 = ADP + phosphate + aliphatic sulfonateSide 2 + [sulfonate-binding protein]Side 1.. Functionally, part of the ABC transporter complex SsuABC involved in aliphatic sulfonates import. Responsible for energy coupling to the transport system. The protein is Aliphatic sulfonates import ATP-binding protein SsuB 2 of Pseudomonas aeruginosa (strain ATCC 15692 / DSM 22644 / CIP 104116 / JCM 14847 / LMG 12228 / 1C / PRS 101 / PAO1).